We begin with the raw amino-acid sequence, 524 residues long: MASRMQQPLYILAEGTNRTHGRSAQDSNIRAGKAVAEAVRTTLGPRGMDKMLVDSSGEVVITNDGATILEKMDIEHPAAQMLVEVSQTQEEEVGDGTTTAAVLTGELLAHAEDLLDDDLHPTVIVEGYTEAARIAQDAIDDMVLDVTLDDDLLRKVAESSMTGKGTGDVTADVLAKHVVKAVQMVHEDDNGVFHRDDVRVLTRTGASSSATELVEGVVLDKEPVNENMPRSVSDATVAVLDMKLDVRKSEVDTEYNITSVDQLTAAIDAEDSELRGYAKALADAGVDVVFCTKSIDDRVAGFLADAGILAFKSVKKSDARALARATGAKRLGSLSDLDESDLGRVDAVSIRSFGDDDLAFVEGGAAARAVTLFLRGGTEHVVDELERAIEDAVDVVVAAIDKGGVVPGAGATEIAIADRIRSEAAGIEGRKQLAVEAYADAVEALPRTLAENTGMDPIDALVDLRARYETEGLAGIISSGRSGEIGDPVELGVIDPVAVKREAIESATEAATMIVRIDDVIAAK.

Belongs to the TCP-1 chaperonin family. The thermosome or CCT complex is a oligomeric complex of two octameric double-ring structures; the complex is probably a heterooligomer of CCT1, CCT2 and CCT3 with yet unknown stoichiometry.

Its function is as follows. Molecular chaperone that assists in the folding or refolding of nascent or denatured proteins along with ATP hydrolysis. ATPase activity is highest in thermosome assemblies containing CCT1:CCT2, followed by assemblies containing CCT1:CCT2:CCT3. Not required for thermosome ATPase activity. Not required for growth. This Haloferax volcanii (strain ATCC 29605 / DSM 3757 / JCM 8879 / NBRC 14742 / NCIMB 2012 / VKM B-1768 / DS2) (Halobacterium volcanii) protein is Thermosome subunit 3 (cct3).